A 90-amino-acid chain; its full sequence is Small ribosomal subunit protein uS15c (90 aa).

The protein belongs to the universal ribosomal protein uS15 family. In terms of assembly, part of the 30S ribosomal subunit.

Its subcellular location is the plastid. It is found in the chloroplast. The polypeptide is Small ribosomal subunit protein uS15c (rps15-A) (Lolium perenne (Perennial ryegrass)).